The primary structure comprises 432 residues: Chorismate synthase aro-2 (432 aa).

Catalysis depends on residues His17, His106, and Asp367. The interval 406–432 (LKQTINSGKDTVGNGVSENVQESDLAQ) is disordered. The span at 408–432 (QTINSGKDTVGNGVSENVQESDLAQ) shows a compositional bias: polar residues.

It belongs to the chorismate synthase family. As to quaternary structure, homotetramer.

It carries out the reaction 5-O-(1-carboxyvinyl)-3-phosphoshikimate = chorismate + phosphate. The catalysed reaction is FMNH2 + NADP(+) = FMN + NADPH + 2 H(+). It functions in the pathway metabolic intermediate biosynthesis; chorismate biosynthesis; chorismate from D-erythrose 4-phosphate and phosphoenolpyruvate: step 7/7. Its function is as follows. Bifunctional chorismate synthase and flavin reductase that catalyzes the conversion of 5-enolpyruvylshikimate 3-phosphate (EPSP) to form chorismate, which is the last common intermediate in the synthesis of the three aromatic amino acids phenylalanine, tyrosine and tryptophan. Acts also as a flavin reductase (FR) able to generate reduced flavin mononucleotide in the presence of NADPH. The protein is Chorismate synthase aro-2 of Neurospora crassa (strain ATCC 24698 / 74-OR23-1A / CBS 708.71 / DSM 1257 / FGSC 987).